Consider the following 366-residue polypeptide: 3-dehydroquinate synthase (366 aa).

Residues 75 to 80 (DGEQYK), 109 to 113 (GVIGD), 133 to 134 (TT), K146, K155, and 173 to 176 (CLST) contribute to the NAD(+) site. 3 residues coordinate Zn(2+): E188, H251, and H268.

It belongs to the sugar phosphate cyclases superfamily. Dehydroquinate synthase family. NAD(+) is required as a cofactor. The cofactor is Co(2+). Requires Zn(2+) as cofactor.

It localises to the cytoplasm. The enzyme catalyses 7-phospho-2-dehydro-3-deoxy-D-arabino-heptonate = 3-dehydroquinate + phosphate. It functions in the pathway metabolic intermediate biosynthesis; chorismate biosynthesis; chorismate from D-erythrose 4-phosphate and phosphoenolpyruvate: step 2/7. Catalyzes the conversion of 3-deoxy-D-arabino-heptulosonate 7-phosphate (DAHP) to dehydroquinate (DHQ). The protein is 3-dehydroquinate synthase of Vibrio parahaemolyticus serotype O3:K6 (strain RIMD 2210633).